We begin with the raw amino-acid sequence, 85 residues long: UPF0213 protein NP_0776A (85 aa).

The GIY-YIG domain maps to 3 to 78 (ADHYVYVLSC…KSLSRAKKER (76 aa)). The span at 58 to 70 (KSAAMQREHEIKS) shows a compositional bias: basic and acidic residues. The interval 58 to 85 (KSAAMQREHEIKSLSRAKKERLVADETG) is disordered.

This sequence belongs to the UPF0213 family.

The polypeptide is UPF0213 protein NP_0776A (Natronomonas pharaonis (strain ATCC 35678 / DSM 2160 / CIP 103997 / JCM 8858 / NBRC 14720 / NCIMB 2260 / Gabara) (Halobacterium pharaonis)).